Consider the following 384-residue polypeptide: D-alanine--D-alanine ligase (384 aa).

The ATP-grasp domain maps to Lys-167–Asp-374. Residue Cys-195 to Glu-250 participates in ATP binding. Residues Asp-329, Glu-341, and Asn-343 each coordinate Mg(2+).

It belongs to the D-alanine--D-alanine ligase family. Requires Mg(2+) as cofactor. Mn(2+) serves as cofactor.

The protein localises to the cytoplasm. It catalyses the reaction 2 D-alanine + ATP = D-alanyl-D-alanine + ADP + phosphate + H(+). Its pathway is cell wall biogenesis; peptidoglycan biosynthesis. Cell wall formation. This is D-alanine--D-alanine ligase from Mycobacterium leprae (strain TN).